The chain runs to 421 residues: uncharacterized protein (421 aa).

This is an uncharacterized protein from Caenorhabditis elegans.